The following is an 81-amino-acid chain: Defensin-like protein 153 (81 aa).

An N-terminal signal peptide occupies residues Met-1 to Gly-26. Cystine bridges form between Cys-30/Cys-81, Cys-41/Cys-60, Cys-46/Cys-75, and Cys-50/Cys-77.

The protein belongs to the DEFL family.

Its subcellular location is the secreted. The polypeptide is Defensin-like protein 153 (LCR31) (Arabidopsis thaliana (Mouse-ear cress)).